A 106-amino-acid chain; its full sequence is Large ribosomal subunit protein uL24 (106 aa).

Belongs to the universal ribosomal protein uL24 family. As to quaternary structure, part of the 50S ribosomal subunit.

Its function is as follows. One of two assembly initiator proteins, it binds directly to the 5'-end of the 23S rRNA, where it nucleates assembly of the 50S subunit. In terms of biological role, one of the proteins that surrounds the polypeptide exit tunnel on the outside of the subunit. The protein is Large ribosomal subunit protein uL24 of Bordetella avium (strain 197N).